The sequence spans 499 residues: Terminase, large subunit (499 aa).

The tract at residues 1-58 (MELDAILDNLSDEEQIELLELLEEEENYRNTHLLYEFAPYSKQREFIDAGHDYPERCF) is interaction with the terminase small subunit. The tract at residues 1–286 (MELDAILDNL…EHEREARARG (286 aa)) is ATPase activity. A Walker A motif motif is present at residues 60–67 (AGNQLGKS). The Walker B motif signature appears at 199–204 (GVWFDE). Catalysis depends on glutamate 204, which acts as the For ATPase activity. The segment at 312-482 (DHFYVIDAQD…FARMMRDIRK (171 aa)) is nuclease activity. Mg(2+)-binding residues include aspartate 321 and aspartate 459.

It belongs to the Lederbergvirus large terminase family. In terms of assembly, interacts with the terminase small subunit; the active complex is composed of dimer of terminase large subunits and a nonamer ring of terminase small subunits. Interacts with the portal protein; this interaction allows the packaging of viral DNA. Mg(2+) is required as a cofactor.

The terminase large subunit acts as an ATP driven molecular motor necessary for viral DNA translocation into empty capsids and as an endonuclease that cuts the viral genome to initiate and to end a packaging reaction. The terminase lies at a unique vertex of the procapsid and is composed of two subunits, a small terminase subunit involved in viral DNA recognition (packaging 'pac' sequence), and a large terminase subunit possessing endonucleolytic and ATPase activities. Both terminase subunits heterooligomerize and are docked on the portal protein to form the packaging machine. Once the capsid is packaged with the DNA (headful packaging), the terminase cleaves the viral genome concatemer and is substituted by the tail. The polypeptide is Terminase, large subunit (2) (Salmonella phage P22 (Bacteriophage P22)).